Here is a 341-residue protein sequence, read N- to C-terminus: Holliday junction branch migration complex subunit RuvB (341 aa).

Positions 1–22 (MSETAGKGVTMPEIMQSSYPDE) are disordered. The large ATPase domain (RuvB-L) stretch occupies residues 4–193 (TAGKGVTMPE…FGIISRLEFY (190 aa)). ATP contacts are provided by residues I32, R33, G74, K77, T78, T79, 140-142 (EDY), R183, Y193, and R230. Residue T78 participates in Mg(2+) binding. The interval 194 to 264 (TPEELSQIIL…LVNHALQKLD (71 aa)) is small ATPAse domain (RuvB-S). A head domain (RuvB-H) region spans residues 267-341 (EKGLDQMDRK…KAYKHLNLTD (75 aa)). Residues R322 and R327 each coordinate DNA.

It belongs to the RuvB family. As to quaternary structure, homohexamer. Forms an RuvA(8)-RuvB(12)-Holliday junction (HJ) complex. HJ DNA is sandwiched between 2 RuvA tetramers; dsDNA enters through RuvA and exits via RuvB. An RuvB hexamer assembles on each DNA strand where it exits the tetramer. Each RuvB hexamer is contacted by two RuvA subunits (via domain III) on 2 adjacent RuvB subunits; this complex drives branch migration. In the full resolvosome a probable DNA-RuvA(4)-RuvB(12)-RuvC(2) complex forms which resolves the HJ.

It localises to the cytoplasm. The enzyme catalyses ATP + H2O = ADP + phosphate + H(+). Its function is as follows. The RuvA-RuvB-RuvC complex processes Holliday junction (HJ) DNA during genetic recombination and DNA repair, while the RuvA-RuvB complex plays an important role in the rescue of blocked DNA replication forks via replication fork reversal (RFR). RuvA specifically binds to HJ cruciform DNA, conferring on it an open structure. The RuvB hexamer acts as an ATP-dependent pump, pulling dsDNA into and through the RuvAB complex. RuvB forms 2 homohexamers on either side of HJ DNA bound by 1 or 2 RuvA tetramers; 4 subunits per hexamer contact DNA at a time. Coordinated motions by a converter formed by DNA-disengaged RuvB subunits stimulates ATP hydrolysis and nucleotide exchange. Immobilization of the converter enables RuvB to convert the ATP-contained energy into a lever motion, pulling 2 nucleotides of DNA out of the RuvA tetramer per ATP hydrolyzed, thus driving DNA branch migration. The RuvB motors rotate together with the DNA substrate, which together with the progressing nucleotide cycle form the mechanistic basis for DNA recombination by continuous HJ branch migration. Branch migration allows RuvC to scan DNA until it finds its consensus sequence, where it cleaves and resolves cruciform DNA. The sequence is that of Holliday junction branch migration complex subunit RuvB from Lawsonia intracellularis (strain PHE/MN1-00).